Reading from the N-terminus, the 690-residue chain is Glycine--tRNA ligase beta subunit (690 aa).

This sequence belongs to the class-II aminoacyl-tRNA synthetase family. In terms of assembly, tetramer of two alpha and two beta subunits.

The protein resides in the cytoplasm. It catalyses the reaction tRNA(Gly) + glycine + ATP = glycyl-tRNA(Gly) + AMP + diphosphate. This is Glycine--tRNA ligase beta subunit from Tolumonas auensis (strain DSM 9187 / NBRC 110442 / TA 4).